Consider the following 189-residue polypeptide: Protein Rex (189 aa).

A compositionally biased stretch (basic residues) spans 1–16 (MPKTRRRPRRSQRKRP). The interval 1–27 (MPKTRRRPRRSQRKRPPTPWPTSQGLD) is disordered. Residues 2–18 (PKTRRRPRRSQRKRPPT) carry the Nuclear localization signal, and RNA-binding (RxRE) motif. The tract at residues 56–70 (RPAYIVTPYWPPVQS) is homomultimerization. Ser70 is modified (phosphoserine; by host). Positions 73–189 (SPGTPSMDAL…PPSPGPSCPT (117 aa)) are disordered. Low complexity predominate over residues 80 to 94 (DALSAQLYSSLSLDS). The Nuclear export signal motif lies at 82-93 (LSAQLYSSLSLD). Positions 123-131 (PSSRPCANT) are homomultimerization. A compositionally biased stretch (polar residues) spans 143 to 164 (LGSTSQPCLFQTPDSGPKTCTP). The residue at position 174 (Thr174) is a Phosphothreonine; by host. Ser177 is modified (phosphoserine; by host). Over residues 178 to 189 (FPPPSPGPSCPT) the composition is skewed to pro residues.

This sequence belongs to the deltaretrovirus Rex protein family. As to quaternary structure, homomultimer. Multimeric assembly is essential for activity and involves XPO1. Binds to human XPO1 and KPNB1. Interacts (via N-terminal nuclear localization signal) with human NPM1.

It localises to the host nucleus. The protein localises to the host nucleolus. The protein resides in the host cytoplasm. Functionally, rex escorts unspliced gag-pro-pol and singly spliced env mRNAs out of the nucleus of infected cells. These mRNAs carry a recognition sequence called Rex responsive element (RxRE or XRE) located at the 3' region of the long terminal repeat (LTR). This function is essential since most HTLV proteins are translated from unspliced or partially spliced pre-mRNAs that cannot exit the nucleus by the pathway used by fully processed cellular mRNAs. Rex itself is translated from a fully spliced mRNA that probably readily exits the nucleus. Rex's nuclear localization signal (NLS) binds directly to KPNB1/importin beta-1 without previous binding to KPNA1/importin alpha-1. KPNB1 binds to the GDP bound form of RAN (Ran-GDP) and targets Rex to the nucleus. In the nucleus, the conversion from Ran-GDP to Ran-GTP dissociates Rex from KPNB1 and allows Rex's binding to the RRE in viral pre-mRNAs. Rex multimerizes on the RRE via cooperative assembly. This multimerization is critical for its full biological activity, since it may shield the viral RNA from being spliced or down-regulated, and probably exposes Rex's nuclear export signal (NES) to the surface. Rex can then form a complex with XPO1/CRM1, RANBP3 and Ran-GTP, leading to nuclear export of the complex. Conversion from Ran-GTP to Ran-GDP mediates dissociation of the Rex/RRE/XPO1/RANBP3/RAN complex, so that Rex can return to the nucleus for a subsequent round of export. The polypeptide is Protein Rex (Human T-cell leukemia virus 1 (strain Japan ATK-1 subtype A) (HTLV-1)).